We begin with the raw amino-acid sequence, 387 residues long: Structural protein ORF387 (387 aa).

Positions 315–387 (KTFQEMVKVA…EEKNNTVKLS (73 aa)) form a coiled coil. The interval 365–387 (LTEEQQQQNETEEEEKNNTVKLS) is disordered.

The protein localises to the virion. In Acidianus convivator (ATV), this protein is Structural protein ORF387.